A 353-amino-acid polypeptide reads, in one-letter code: Protein RecA (353 aa).

67 to 74 serves as a coordination point for ATP; it reads GPESSGKT.

Belongs to the RecA family.

Its subcellular location is the cytoplasm. Can catalyze the hydrolysis of ATP in the presence of single-stranded DNA, the ATP-dependent uptake of single-stranded DNA by duplex DNA, and the ATP-dependent hybridization of homologous single-stranded DNAs. It interacts with LexA causing its activation and leading to its autocatalytic cleavage. The sequence is that of Protein RecA from Shewanella sediminis (strain HAW-EB3).